The sequence spans 1936 residues: MSLKGSLKLPAAPKDKVRNITKFPVLVEGEVVTNYAQKDVRPIFQKLSYPVFIDLSEGIYLLEKLNLSSNSLIEVTSLGHLNKLKRLILNRNNLIEYSVQGLSSLVYLGLCNNRIDRITDMSDCKKLINIDLSGNRLTCGDGFDHFSKLKSLKVLDLSSNSINCSLIDFQKKILEPLKKSKTLEYLSFENNLIEKKYEEFRLFVINELPKLKYLNWVLISKDERTKASKLDSEGFFSKQLSILSVTPVVHNNNNPNNTVTSAQSSPSLSSVSTPIPTPLNTSSNNIGGGGSGTTTSVSVGSSPTIRGMPSSPNSRSTSFIQRKPSVGANMMPKLNSSLNRSTDFLGKERENHQSTSPSSSSLSISSSSQNNNSNHHHHHPKSIDETPEVLSPFDILQSKVNAENCLSSSQQDLIVNHNNLTTASQILQEIKPTKELTKQETEDYIDILLNELQPNNTDFPTFASVIDQKVYLDLLYRAIIEDAIPEELIEECNKSTTTAATAAAVVDFVTPQLTSLSSSSSSSSTTPPQPQLPPPPPQQQQLDLSLPLPPVNIINMPMDDDELISVPTDESELPVVSTIVPSLVKESSRESLLVTTIDNSTLSTTPPLSSTTPPSPSPKLPTLEETIESVVTAKPSSTTTTATQTNKVSGGSAKEIWTKIDQNTATTPSTPSKNLPKRLPSQSNLINNNNNNNVINVPPPTQSILKPVVGGGSGSTPSSPQMKPMAKPIAKIPAVSTTTNTTPTSTPGSPSKPIMKPVIKKVPAISLKQDQPPIVSPPQPQPQPPIVQQKQQQQQQQQQQQQPQQHFKSEIDKALADIDSWGVIPTAPQAEIKKPIIPQELLSNIQKVESPTEMVENATSKLDEMIMEYHNTSPTSSPTNTRKSITPVQQQQPIQQPIQQPIQQPIQQPIQQPIQQQQQPPIQQIDQVQRMINNETNRIGSMMILGQNISLPNWIVPHDQIQVGSRLGLGSFGDCYTGNAFSIPTILKKLRTQRFTDQFLGQFKNEVMQIRELQHENLVPVSGCCLDNNIYIVHPYYDASNLQTLLFEQSHNNNNNNNNNNNNNNNNNNNNNNNNNHTIISNEFIHRVSLGISKAMTYLHSHDVVHRALKLNNILIDRVSGNVLVRDYGFNFVKDGIFRTGQQSSPYLAPELFNSNCNQYDTNSDQFGFAMILLQLFTRSPLFQDIHVSRITDTILNGVRPEIPDNVPSVFSRLIKACWSADSSARPSFLTISKILSQPFQRIFALSPSTTITKPIVSTGNTTIDSSSSSSGSGSSSVVGSVNSTTIPPVNNSNTGSTGSTSATVKHQFSETGELNRKMILVLERIVSMLSTAAASASTSTISTDSIDSIKRALKALENLSSPENHSSMVGIGLMRSLCFIGTIHLAEIDEQLLRVIYSLSTNEQLSNEFILAGGFTPLSQWVSSSSSSSTSANISLLAIKLLTVLADEQHLHHVRLTGILSSLTQQFVNYTSNNQNGGGGSGGGVINETIILQSVGAMSRILLNQDNQNQFIEEGGVSSLLKMLLNSGNSLSMRALLALCCLISNQNCKSQLHNAGIIPKLMELLSSPQKLLRLHSLKVIETMSKDIEFRKLLIQDNCLSLLVNLLLNSYNGTNTGIGNNTTGNNNDSQESICSILSCIGSLLKNQIALESFYQSNGVDVLIKLIGYNQQIEILESLFPVYCLLINHEQSRLKLVPTINQLVEILSNSTLKESIIISILKCLTLFSSHSSCIEFIEQSMSVSIVSTLLIRNENNYEIKIHSLRFVSSLAKVNNKLAVNIHMMGILQTLVNNLYDKNSMIKDEAISTISWLVSSQECRSIFLQKNVLPMLFDFLSTRNVDIMERLIWAISFFALDDSAQSLMRDNQQCIQFIVNCLDRHEEVFKTLSIKTILILSQKQINHQALKRVGVDFQLQVLSSSSNRSIQLASKKILSLLS.

LRR repeat units follow at residues 61-82 (LLEKLNLSSNSLIEVTSLGHLN), 83-103 (KLKRLILNRNNLIEYSVQGLS), 104-125 (SLVYLGLCNNRIDRITDMSDCK), 126-147 (KLINIDLSGNRLTCGDGFDHFS), and 151-173 (SLKVLDLSSNSINCSLIDFQKKI). The LRRCT domain maps to 191 to 230 (NLIEKKYEEFRLFVINELPKLKYLNWVLISKDERTKASKL). Low complexity-rich tracts occupy residues 253–285 (NNPNNTVTSAQSSPSLSSVSTPIPTPLNTSSNN) and 293–302 (TTTSVSVGSS). Disordered stretches follow at residues 253 to 319 (NNPN…STSF) and 347 to 386 (KERENHQSTSPSSSSLSISSSSQNNNSNHHHHHPKSIDET). A compositionally biased stretch (polar residues) spans 310–319 (SSPNSRSTSF). 2 HEAT repeats span residues 325 to 368 (SVGA…SSSS) and 439 to 476 (QETEDYIDILLNELQPNNTDFPTFASVIDQKVYLDLLY). Residues 353-373 (QSTSPSSSSLSISSSSQNNNS) are compositionally biased toward low complexity. Positions 516–526 (LSSSSSSSSTT) are enriched in low complexity. 5 disordered regions span residues 516-544 (LSSSSSSSSTTPPQPQLPPPPPQQQQLDL), 599-620 (NSTLSTTPPLSSTTPPSPSPKL), 660-689 (IDQNTATTPSTPSKNLPKRLPSQSNLINNN), 702-756 (QSIL…PIMK), and 769-809 (QDQP…HFKS). Residues 527-538 (PPQPQLPPPPPQ) show a composition bias toward pro residues. HEAT repeat units lie at residues 574 to 614 (PVVS…TTPP) and 617 to 654 (SPKLPTLEETIESVVTAKPSSTTTTATQTNKVSGGSAK). Low complexity predominate over residues 600-612 (STLSTTPPLSSTT). Residues 660–673 (IDQNTATTPSTPSK) are compositionally biased toward polar residues. The span at 736–756 (STTTNTTPTSTPGSPSKPIMK) shows a compositional bias: low complexity. Residues 774-785 (IVSPPQPQPQPP) show a composition bias toward pro residues. Residues 786–805 (IVQQKQQQQQQQQQQQQPQQ) are compositionally biased toward low complexity. The region spanning 961–1241 (IQVGSRLGLG…ISKILSQPFQ (281 aa)) is the Protein kinase domain. Residues 967–975 (LGLGSFGDC) and lysine 988 contribute to the ATP site. Disordered regions lie at residues 1050–1075 (SHNNNNNNNNNNNNNNNNNNNNNNNN) and 1261–1308 (NTTI…VKHQ). Low complexity-rich tracts occupy residues 1052-1075 (NNNNNNNNNNNNNNNNNNNNNNNN), 1266-1282 (SSSSSSGSGSSSVVGSV), and 1291-1302 (NNSNTGSTGSTS). HEAT repeat units lie at residues 1317–1356 (RKMILVLERIVSMLSTAAASASTSTISTDSIDSIKRALKA), 1512–1549 (FIEEGGVSSLLKMLLNSGNSLSMRALLALCCLISNQNC), 1553–1590 (LHNAGIIPKLMELLSSPQKLLRLHSLKVIETMSKDIEF), 1598–1635 (NCLSLLVNLLLNSYNGTNTGIGNNTTGNNNDSQESICS), 1690–1728 (QSRLKLVPTINQLVEILSNSTLKESIIISILKCLTLFSS), 1739–1775 (SMSVSIVSTLLIRNENNYEIKIHSLRFVSSLAKVNNK), 1780–1817 (IHMMGILQTLVNNLYDKNSMIKDEAISTISWLVSSQEC), 1821–1858 (FLQKNVLPMLFDFLSTRNVDIMERLIWAISFFALDDSA), and 1863–1900 (RDNQQCIQFIVNCLDRHEEVFKTLSIKTILILSQKQIN).

This is Probable inactive serine/threonine-protein kinase DDB_G0278909 from Dictyostelium discoideum (Social amoeba).